The chain runs to 323 residues: Phospho-N-acetylmuramoyl-pentapeptide-transferase (323 aa).

9 helical membrane-spanning segments follow: residues 5–25, 57–77, 81–101, 118–138, 140–160, 173–193, 196–216, 225–247, and 302–322; these read SAVLTILSSFLITFLLMPSLI, LLFIFSAVVTILWVAAWQGLI, LWALLFVLVVYGLIGMWDDSI, LCQVLAAMVFTVIYQHEGFQM, FGTTQIGWLYGLFIIFWIVGF, LVSGLSIISFAAYLIIALVNL, PGYPEIALFCLAMIGTLLGFF, IFMGDMGSLAIGASLAAVSLLLH, and IVFWLVGLVAAIIAVTTILLV.

This sequence belongs to the glycosyltransferase 4 family. MraY subfamily. It depends on Mg(2+) as a cofactor.

It is found in the cell membrane. It catalyses the reaction UDP-N-acetyl-alpha-D-muramoyl-L-alanyl-gamma-D-glutamyl-L-lysyl-D-alanyl-D-alanine + di-trans,octa-cis-undecaprenyl phosphate = Mur2Ac(oyl-L-Ala-gamma-D-Glu-L-Lys-D-Ala-D-Ala)-di-trans,octa-cis-undecaprenyl diphosphate + UMP. It participates in cell wall biogenesis; peptidoglycan biosynthesis. Its function is as follows. Catalyzes the initial step of the lipid cycle reactions in the biosynthesis of the cell wall peptidoglycan: transfers peptidoglycan precursor phospho-MurNAc-pentapeptide from UDP-MurNAc-pentapeptide onto the lipid carrier undecaprenyl phosphate, yielding undecaprenyl-pyrophosphoryl-MurNAc-pentapeptide, known as lipid I. This Limosilactobacillus reuteri (strain DSM 20016) (Lactobacillus reuteri) protein is Phospho-N-acetylmuramoyl-pentapeptide-transferase.